The primary structure comprises 171 residues: Large ribosomal subunit protein uL10 (171 aa).

It belongs to the universal ribosomal protein uL10 family. In terms of assembly, part of the ribosomal stalk of the 50S ribosomal subunit. The N-terminus interacts with L11 and the large rRNA to form the base of the stalk. The C-terminus forms an elongated spine to which L12 dimers bind in a sequential fashion forming a multimeric L10(L12)X complex.

Forms part of the ribosomal stalk, playing a central role in the interaction of the ribosome with GTP-bound translation factors. The polypeptide is Large ribosomal subunit protein uL10 (Rhizorhabdus wittichii (strain DSM 6014 / CCUG 31198 / JCM 15750 / NBRC 105917 / EY 4224 / RW1) (Sphingomonas wittichii)).